A 340-amino-acid chain; its full sequence is Protein-arginine kinase (340 aa).

Residues 21-242 form the Phosphagen kinase C-terminal domain; the sequence is VVLSSRIRLA…EQIIMQERVA (222 aa). ATP is bound by residues 24-28, His-79, Arg-113, 164-168, and 195-200; these read SSRIR, RASVM, and RGIYGE.

It belongs to the ATP:guanido phosphotransferase family.

The catalysed reaction is L-arginyl-[protein] + ATP = N(omega)-phospho-L-arginyl-[protein] + ADP + H(+). In terms of biological role, catalyzes the specific phosphorylation of arginine residues in proteins. The chain is Protein-arginine kinase from Listeria welshimeri serovar 6b (strain ATCC 35897 / DSM 20650 / CCUG 15529 / CIP 8149 / NCTC 11857 / SLCC 5334 / V8).